A 291-amino-acid chain; its full sequence is Stomatin-like protein 3 (291 aa).

A Phosphoserine modification is found at Ser7. A helical; Signal-anchor for type III membrane protein membrane pass occupies residues 29-49; that stretch reads WILFSLSFLLVIITFPISIWM. The Cytoplasmic portion of the chain corresponds to 50–291; it reads CLKIIKEYER…DNHKKLPNKA (242 aa). Ser241 bears the Phosphoserine mark.

It belongs to the band 7/mec-2 family. In terms of assembly, homodimer. Interacts with PIEZO1 and PIEZO2.

It localises to the cell membrane. Its function is as follows. Required for the function of many mechanoreceptors. Modulate mechanotransduction channels and acid-sensing ion channels (ASIC) proteins. Potentiates PIEZO1 and PIEZO2 function by increasing their sensitivity to mechanical stimulations. The chain is Stomatin-like protein 3 (STOML3) from Homo sapiens (Human).